We begin with the raw amino-acid sequence, 114 residues long: UPF0342 protein LCABL_19440 (114 aa).

The protein belongs to the UPF0342 family.

The chain is UPF0342 protein LCABL_19440 from Lacticaseibacillus casei (strain BL23) (Lactobacillus casei).